We begin with the raw amino-acid sequence, 583 residues long: Probable phosphoglucomutase, cytoplasmic 1 (583 aa).

Positions 24 and 123 each coordinate alpha-D-glucose 1,6-bisphosphate. Ser123 acts as the Phosphoserine intermediate in catalysis. Residues Ser123, Asp299, Asp301, and Asp303 each contribute to the Mg(2+) site. The residue at position 123 (Ser123) is a Phosphoserine. The alpha-D-glucose 1,6-bisphosphate site is built by Asp303, Arg304, Thr367, Glu386, Ser388, and Lys399.

Belongs to the phosphohexose mutase family. In terms of assembly, monomer. It depends on Mg(2+) as a cofactor.

It localises to the cytoplasm. The catalysed reaction is alpha-D-glucose 1-phosphate = alpha-D-glucose 6-phosphate. It carries out the reaction O-phospho-L-seryl-[protein] + alpha-D-glucose 1-phosphate = alpha-D-glucose 1,6-bisphosphate + L-seryl-[protein]. The enzyme catalyses alpha-D-glucose 1,6-bisphosphate + L-seryl-[protein] = O-phospho-L-seryl-[protein] + alpha-D-glucose 6-phosphate. Its function is as follows. Catalyzes the reversible isomerization of alpha-D-glucose 1-phosphate to alpha-D-glucose 6-phosphate. The mechanism proceeds via the intermediate compound alpha-D-glucose 1,6-bisphosphate. This enzyme participates in both the breakdown and synthesis of glucose. This is Probable phosphoglucomutase, cytoplasmic 1 from Arabidopsis thaliana (Mouse-ear cress).